The following is a 125-amino-acid chain: Fluoride-specific ion channel FluC (125 aa).

4 helical membrane-spanning segments follow: residues 9–29 (LFCA…YGLL), 32–52 (AFPY…GLIM), 67–87 (IGLT…SYET), and 99–119 (AFTN…LGII). Glycine 75 and threonine 78 together coordinate Na(+).

This sequence belongs to the fluoride channel Fluc/FEX (TC 1.A.43) family.

It localises to the cell inner membrane. It carries out the reaction fluoride(in) = fluoride(out). Na(+) is not transported, but it plays an essential structural role and its presence is essential for fluoride channel function. Functionally, fluoride-specific ion channel. Important for reducing fluoride concentration in the cell, thus reducing its toxicity. This is Fluoride-specific ion channel FluC from Trichlorobacter lovleyi (strain ATCC BAA-1151 / DSM 17278 / SZ) (Geobacter lovleyi).